The chain runs to 829 residues: Leucine--tRNA ligase (829 aa).

The 'HIGH' region motif lies at 42 to 52 (PYPSGNLHMGH). A 'KMSKS' region motif is present at residues 582–586 (KMSKS). Lys-585 serves as a coordination point for ATP.

Belongs to the class-I aminoacyl-tRNA synthetase family.

Its subcellular location is the cytoplasm. The catalysed reaction is tRNA(Leu) + L-leucine + ATP = L-leucyl-tRNA(Leu) + AMP + diphosphate. The sequence is that of Leucine--tRNA ligase from Moorella thermoacetica (strain ATCC 39073 / JCM 9320).